Reading from the N-terminus, the 556-residue chain is Cholesterol oxidase (556 aa).

FAD contacts are provided by glycine 18, glutamate 37, glycine 88, alanine 93, and valine 235. Histidine 471 serves as the catalytic Proton acceptor. Glycine 504 is a binding site for FAD.

This sequence belongs to the GMC oxidoreductase family. It depends on FAD as a cofactor.

It catalyses the reaction cholesterol + O2 = cholest-5-en-3-one + H2O2. The catalysed reaction is cholest-5-en-3-one = cholest-4-en-3-one. It functions in the pathway steroid metabolism; cholesterol degradation. In terms of biological role, bifunctional enzyme that catalyzes the oxidation and isomerization of cholesterol to cholestenone (cholest-4-en-3-one), an initial step in the cholesterol degradation process. This chain is Cholesterol oxidase, found in Acinetobacter baumannii.